A 256-amino-acid polypeptide reads, in one-letter code: 5-keto-4-deoxy-D-glucarate aldolase (256 aa).

His50 serves as the catalytic Proton acceptor. Residue Gln151 participates in substrate binding. Residue Glu153 coordinates Mg(2+). Substrate contacts are provided by Ser178 and Asp179. A Mg(2+)-binding site is contributed by Asp179.

The protein belongs to the HpcH/HpaI aldolase family. KDGluc aldolase subfamily. In terms of assembly, homohexamer; trimer of dimers. Requires Mg(2+) as cofactor.

It carries out the reaction 5-dehydro-4-deoxy-D-glucarate = 2-hydroxy-3-oxopropanoate + pyruvate. It catalyses the reaction 2-dehydro-3-deoxy-D-glucarate = 2-hydroxy-3-oxopropanoate + pyruvate. The protein operates within carbohydrate acid metabolism; galactarate degradation; D-glycerate from galactarate: step 2/3. Functionally, catalyzes the reversible retro-aldol cleavage of both 5-keto-4-deoxy-D-glucarate and 2-keto-3-deoxy-D-glucarate to pyruvate and tartronic semialdehyde. The protein is 5-keto-4-deoxy-D-glucarate aldolase of Enterobacter sp. (strain 638).